The primary structure comprises 528 residues: Glucans biosynthesis protein G 2 (528 aa).

An N-terminal signal peptide occupies residues 1–44; that stretch reads MRLHLTFNHSTPATGRKNTKHTLFFGSMLACIISIISLVVPAYG.

This sequence belongs to the OpgD/OpgG family.

It localises to the periplasm. The protein operates within glycan metabolism; osmoregulated periplasmic glucan (OPG) biosynthesis. Its function is as follows. Involved in the biosynthesis of osmoregulated periplasmic glucans (OPGs). The chain is Glucans biosynthesis protein G 2 (opgG2) from Shewanella oneidensis (strain ATCC 700550 / JCM 31522 / CIP 106686 / LMG 19005 / NCIMB 14063 / MR-1).